A 330-amino-acid chain; its full sequence is MKEMVSSSTFRAPGGLGFLGPSKIGLIPLRNRSGVRSRVKYIAPKCAVSSARPASQPRFIQHKKEAFWFYRFLSIVYDHVINPGHWTEDMRDDALEPAELYHHGLKVVDVGGGTGFTTLGIVKHVDNENVTLLDQSPHQLEKARQKVALNGVNIIEGDAEDLPYPTDTFDRYVSAGSIEYWPDPQRGIREAYRVLKLGGVACLIGPVHPTFWLSRFFADMWMLFPKEEEYIEWFQKAGFQDVKIKRIGPKWYRGVRRHGLIMGCSVTGVKRSSGDSPLQLGPKAEDVEKPVNPFTFIFRFVMGTICASYYVLVPIYMWMKDQIVPKDQPI.

The transit peptide at 1-45 (MKEMVSSSTFRAPGGLGFLGPSKIGLIPLRNRSGVRSRVKYIAPK) directs the protein to the chloroplast. Residues 46–295 (CAVSSARPAS…DVEKPVNPFT (250 aa)) lie on the Chloroplast intermembrane side of the membrane. The segment at 107 to 116 (VVDVGGGTGF) is SAM motif I. The tract at residues 152 to 165 (VNIIEGDAEDLPYP) is SAM motif II. Residues 193–206 (RVLKLGGVACLIGP) form an SAM motif III region. Residues 296-316 (FIFRFVMGTICASYYVLVPIY) form a helical membrane-spanning segment. The Stromal portion of the chain corresponds to 317–330 (MWMKDQIVPKDQPI).

It belongs to the class I-like SAM-binding methyltransferase superfamily. MPBQ/MBSQ MT family.

The protein resides in the plastid. Its subcellular location is the chloroplast inner membrane. It catalyses the reaction 2-methyl-6-phytyl-1,4-benzene-1,4-diol + S-adenosyl-L-methionine = 2,3-dimethyl-6-phytylbenzene-1,4-diol + S-adenosyl-L-homocysteine + H(+). It carries out the reaction 2-methyl-6-(all-trans-nonaprenyl)benzene-1,4-diol + S-adenosyl-L-methionine = plastoquinol-9 + S-adenosyl-L-homocysteine + H(+). The catalysed reaction is 6-geranylgeranyl-2-methylbenzene-1,4-diol + S-adenosyl-L-methionine = 6-geranylgeranyl-2,3-dimethylbenzene-1,4-diol + S-adenosyl-L-homocysteine + H(+). The protein operates within cofactor biosynthesis; tocopherol biosynthesis. Functionally, involved in a key methylation step in both tocopherols (vitamin E) and plastoquinone synthesis. Catalyzes the conversion of 2-methyl-6-phytyl-1,4-hydroquinone (MPBQ) to 2,3-dimethyl-6-phytyl-1,4-hydroquinone (DMPQ, a substrate for tocopherol cyclase), and 2-methyl-6-solanyl-1,4-benzoquinone (MSBQ) to plastoquinone. The protein is 2-methyl-6-phytyl-1,4-hydroquinone methyltransferase 1, chloroplastic (ARSM2) of Oryza sativa subsp. japonica (Rice).